A 128-amino-acid polypeptide reads, in one-letter code: Mediator of RNA polymerase II transcription subunit 31-A (128 aa).

This sequence belongs to the Mediator complex subunit 31 family. Component of the Mediator complex.

Its subcellular location is the nucleus. Component of the Mediator complex, a coactivator involved in the regulated transcription of nearly all RNA polymerase II-dependent genes. Mediator functions as a bridge to convey information from gene-specific regulatory proteins to the basal RNA polymerase II transcription machinery. Mediator is recruited to promoters by direct interactions with regulatory proteins and serves as a scaffold for the assembly of a functional preinitiation complex with RNA polymerase II and the general transcription factors. The chain is Mediator of RNA polymerase II transcription subunit 31-A (med31-a) from Xenopus laevis (African clawed frog).